The chain runs to 201 residues: Lipoprotein signal peptidase (201 aa).

3 helical membrane-spanning segments follow: residues 33–53 (LLLS…VLAV), 86–106 (GYTW…FWMG), and 110–130 (VSSW…GNLV). Active-site residues include Asp-146 and Asp-160. A helical membrane pass occupies residues 158–178 (VADPSVVVGAILLVVLSIFGF).

It belongs to the peptidase A8 family.

The protein resides in the cell membrane. The enzyme catalyses Release of signal peptides from bacterial membrane prolipoproteins. Hydrolyzes -Xaa-Yaa-Zaa-|-(S,diacylglyceryl)Cys-, in which Xaa is hydrophobic (preferably Leu), and Yaa (Ala or Ser) and Zaa (Gly or Ala) have small, neutral side chains.. The protein operates within protein modification; lipoprotein biosynthesis (signal peptide cleavage). In terms of biological role, this protein specifically catalyzes the removal of signal peptides from prolipoproteins. This is Lipoprotein signal peptidase from Mycobacterium leprae (strain Br4923).